An 80-amino-acid polypeptide reads, in one-letter code: Conotoxin Bu3 (80 aa).

A signal peptide spans 1 to 22 (MKLMCVLIVSVLVLTACQLSTA). Positions 23 to 51 (DDTRDKQKDRLVRLFRKKRDSSDSGLLPR) are excised as a propeptide. 3 disulfide bridges follow: C53–C69, C60–C72, and C68–C79.

Belongs to the conotoxin O1 superfamily. Expressed by the venom duct.

Its subcellular location is the secreted. The sequence is that of Conotoxin Bu3 from Conus bullatus (Bubble cone).